Consider the following 432-residue polypeptide: Adenylosuccinate synthetase (432 aa).

GTP contacts are provided by residues 13-19 (GDEGKGK) and 41-43 (GHT). The Proton acceptor role is filled by D14. Mg(2+)-binding residues include D14 and G41. IMP is bound by residues 14 to 17 (DEGK), 39 to 42 (NAGH), T130, R144, Q225, T240, and R304. The active-site Proton donor is H42. 300–306 (ATTGRKR) lines the substrate pocket. Residues R306, 332–334 (KLD), and 415–417 (STG) contribute to the GTP site.

It belongs to the adenylosuccinate synthetase family. Homodimer. It depends on Mg(2+) as a cofactor.

It localises to the cytoplasm. The catalysed reaction is IMP + L-aspartate + GTP = N(6)-(1,2-dicarboxyethyl)-AMP + GDP + phosphate + 2 H(+). Its pathway is purine metabolism; AMP biosynthesis via de novo pathway; AMP from IMP: step 1/2. Functionally, plays an important role in the de novo pathway of purine nucleotide biosynthesis. Catalyzes the first committed step in the biosynthesis of AMP from IMP. The protein is Adenylosuccinate synthetase of Alteromonas mediterranea (strain DSM 17117 / CIP 110805 / LMG 28347 / Deep ecotype).